Here is a 194-residue protein sequence, read N- to C-terminus: Peptidyl-tRNA hydrolase (194 aa).

TRNA is bound at residue tyrosine 17. The active-site Proton acceptor is histidine 22. TRNA contacts are provided by tyrosine 68, asparagine 70, and asparagine 116.

The protein belongs to the PTH family. As to quaternary structure, monomer.

It localises to the cytoplasm. The enzyme catalyses an N-acyl-L-alpha-aminoacyl-tRNA + H2O = an N-acyl-L-amino acid + a tRNA + H(+). Its function is as follows. Hydrolyzes ribosome-free peptidyl-tRNAs (with 1 or more amino acids incorporated), which drop off the ribosome during protein synthesis, or as a result of ribosome stalling. Catalyzes the release of premature peptidyl moieties from peptidyl-tRNA molecules trapped in stalled 50S ribosomal subunits, and thus maintains levels of free tRNAs and 50S ribosomes. The chain is Peptidyl-tRNA hydrolase from Pseudomonas syringae pv. tomato (strain ATCC BAA-871 / DC3000).